The primary structure comprises 323 residues: MWVLGIDTSCDDTGVGLVRDGKVVVNLVASQVRLHEAFGGVVPELASREHLKALPLLVERALAEAGLRPKDLDLVAATRGPGLIGALLVGYTFAKGMAFALDRPFYAVHHLEGHIAAAWPEGLPPPFLALVASGGHTHLYEVLDLGRYRLLGATRDDAAGEAFDKVARLLGLGFPGGPEVERLAEEAEEAIPFPVPLRGQEGYDFSFSGLKTKALHLVEKGLPKAALAKGFQEAAIAHLAEVVLKAAKDTGHRVLLVAGGVAANRALQERFKEAGLEVHFPPRGLSQDNGAMIALAAWRRHQRGFPPSPLSLGATAYWPLEEA.

Fe cation is bound by residues His-110 and His-114. Substrate contacts are provided by residues 131-135 (VASGG), Asp-164, Gly-177, and Asn-264. Asp-288 contacts Fe cation.

This sequence belongs to the KAE1 / TsaD family. Requires Fe(2+) as cofactor.

The protein resides in the cytoplasm. It catalyses the reaction L-threonylcarbamoyladenylate + adenosine(37) in tRNA = N(6)-L-threonylcarbamoyladenosine(37) in tRNA + AMP + H(+). Its function is as follows. Required for the formation of a threonylcarbamoyl group on adenosine at position 37 (t(6)A37) in tRNAs that read codons beginning with adenine. Is involved in the transfer of the threonylcarbamoyl moiety of threonylcarbamoyl-AMP (TC-AMP) to the N6 group of A37, together with TsaE and TsaB. TsaD likely plays a direct catalytic role in this reaction. This Thermus thermophilus (strain ATCC BAA-163 / DSM 7039 / HB27) protein is tRNA N6-adenosine threonylcarbamoyltransferase.